Reading from the N-terminus, the 117-residue chain is Ribonuclease P protein component (117 aa).

This sequence belongs to the RnpA family. As to quaternary structure, consists of a catalytic RNA component (M1 or rnpB) and a protein subunit.

It carries out the reaction Endonucleolytic cleavage of RNA, removing 5'-extranucleotides from tRNA precursor.. Its function is as follows. RNaseP catalyzes the removal of the 5'-leader sequence from pre-tRNA to produce the mature 5'-terminus. It can also cleave other RNA substrates such as 4.5S RNA. The protein component plays an auxiliary but essential role in vivo by binding to the 5'-leader sequence and broadening the substrate specificity of the ribozyme. This Aliivibrio salmonicida (strain LFI1238) (Vibrio salmonicida (strain LFI1238)) protein is Ribonuclease P protein component.